The primary structure comprises 955 residues: Structure-specific endonuclease subunit SLX4 (955 aa).

Disordered stretches follow at residues 75–173 (QAEQ…RTTS), 189–231 (PVTT…TVSR), 352–376 (GPSN…KKPR), 539–608 (EMQK…PTKI), 621–648 (PIVA…PPPR), 705–784 (AAGQ…ASPD), and 819–846 (LDSD…EKDS). Over residues 123 to 137 (RKARKTANGVTKKKR) the composition is skewed to basic residues. Polar residues predominate over residues 150–159 (NEITTPTKNQ). The span at 189–198 (PVTTSTTDLT) shows a compositional bias: low complexity. Residues 209 to 225 (TKSRVRKTSSAASRKKK) are compositionally biased toward basic residues. A compositionally biased stretch (polar residues) spans 352 to 362 (GPSNDSKIPNQ). The segment covering 539-551 (EMQKSPSRSEPKG) has biased composition (basic and acidic residues). Positions 579-601 (SANSAEHTLKTQASKSTHFASTT) are enriched in polar residues. Composition is skewed to low complexity over residues 705–720 (AAGQ…RTSA) and 727–737 (KTSTAAAAAKS). 2 stretches are compositionally biased toward basic residues: residues 738–748 (PTKRPVGRPRK) and 767–776 (KRPRGRPKKN). Positions 828–841 (SPSPSLSPEPVFSS) are enriched in low complexity.

This sequence belongs to the SLX4 family. In terms of assembly, forms a heterodimer with SLX1. Phosphorylated in response to DNA damage.

The protein localises to the nucleus. Regulatory subunit of the SLX1-SLX4 structure-specific endonuclease that resolves DNA secondary structures generated during DNA repair and recombination. Has endonuclease activity towards branched DNA substrates, introducing single-strand cuts in duplex DNA close to junctions with ss-DNA. The protein is Structure-specific endonuclease subunit SLX4 of Pyricularia oryzae (strain 70-15 / ATCC MYA-4617 / FGSC 8958) (Rice blast fungus).